The sequence spans 159 residues: Phosphopantetheine adenylyltransferase (159 aa).

Threonine 10 serves as a coordination point for substrate. ATP is bound by residues 10–11 (TF) and histidine 18. Residues lysine 42, methionine 74, and arginine 88 each coordinate substrate. ATP contacts are provided by residues 89–91 (GLR), glutamate 99, and 124–130 (WSFISSS).

It belongs to the bacterial CoaD family. In terms of assembly, homohexamer. Mg(2+) is required as a cofactor.

The protein resides in the cytoplasm. It carries out the reaction (R)-4'-phosphopantetheine + ATP + H(+) = 3'-dephospho-CoA + diphosphate. It participates in cofactor biosynthesis; coenzyme A biosynthesis; CoA from (R)-pantothenate: step 4/5. In terms of biological role, reversibly transfers an adenylyl group from ATP to 4'-phosphopantetheine, yielding dephospho-CoA (dPCoA) and pyrophosphate. The chain is Phosphopantetheine adenylyltransferase from Citrobacter koseri (strain ATCC BAA-895 / CDC 4225-83 / SGSC4696).